Reading from the N-terminus, the 136-residue chain is Protein BUNDLE SHEATH DEFECTIVE 2, chloroplastic (136 aa).

Residues 1–56 constitute a chloroplast transit peptide; the sequence is MANSLCFFSSPPTFCFQSPSKNPKPSHFFSTNDNTSSLVQKRELLQTSRSQSFEVK. The segment at 62 to 133 adopts a CR-type zinc-finger fold; sequence PQGTKPNSLV…AGFIGGFLST (72 aa). C72, C75, E78, C80, C83, C86, C107, C110, E115, C118, and C121 together coordinate Zn(2+).

The protein belongs to the BSD2 chaperone family. In terms of assembly, interacts with the RuBisCo large subunit (RbcL) assembled as an intermediate complex made of eight RbcL and eight BSD2 subunits.

The protein resides in the plastid. The protein localises to the chloroplast stroma. Its function is as follows. Chloroplast chaperone required for RuBisCo biogenesis and translational regulation of the RuBisCo large subunit (RbcL). Stabilizes an end-state assembly intermediate of eight RbcL subunits until the small subunits (RBCSs) become available to produce a complete stable RuBisCo complex containing eight small and eight large subunits. This Arabidopsis thaliana (Mouse-ear cress) protein is Protein BUNDLE SHEATH DEFECTIVE 2, chloroplastic.